We begin with the raw amino-acid sequence, 265 residues long: MIKWPWKVQESAHQTALPWQEALSIPLLTGLTEQEQSKLVTLAERFLQQKRLVPLQGFELDSLRSCRIALLFCLPVLELGLEWLDGFHEVLIYPAPFVVDDEWEDDIGLVHNQRIVQSGQSWQQGPIVLNWLDIQDSFDASGFNLIIHEVAHKLDTRNGDRASGVPFISLREVAGWEHDLHAAMNNIQEEIELVGENAASIDAYAASDPAECFAVLSEYFFSAPELFAPRFPSLWQRFCQFYQQDPLQRLHHANDTDSFSATNVH.

Positions 111, 148, 152, and 211 each coordinate Zn(2+).

Belongs to the MtfA family. In terms of assembly, interacts with Mlc. Zn(2+) is required as a cofactor.

The protein localises to the cytoplasm. Involved in the modulation of the activity of the glucose-phosphotransferase system (glucose-PTS). Interacts with the transcriptional repressor Mlc, preventing its interaction with DNA and leading to the modulation of expression of genes regulated by Mlc, including ptsG, which encodes the PTS system glucose-specific EIICB component. Functionally, shows zinc-dependent metallopeptidase activity. This chain is Mlc titration factor A, found in Escherichia coli (strain 55989 / EAEC).